The chain runs to 442 residues: C4-dicarboxylate transport protein (442 aa).

8 consecutive transmembrane segments (helical) span residues Val10–Gly30, Phe40–Ile60, Leu77–Ile97, Leu149–Leu169, Phe185–Phe205, Leu221–Ala241, Val288–Leu308, and Ala354–Ile374. Residues Pro420–Ala442 are disordered.

Belongs to the dicarboxylate/amino acid:cation symporter (DAACS) (TC 2.A.23) family.

It localises to the cell membrane. Functionally, responsible for the transport of dicarboxylates such as succinate, fumarate, and malate across the membrane. The protein is C4-dicarboxylate transport protein of Deinococcus geothermalis (strain DSM 11300 / CIP 105573 / AG-3a).